The chain runs to 585 residues: Regulator of gene activity (585 aa).

The span at 42 to 56 shows a compositional bias: polar residues; it reads FQTDFANSYPGTANY. Disordered regions lie at residues 42 to 93, 148 to 191, and 349 to 394; these read FQTD…GNRN, GGGG…PGSK, and GVGG…KVTN. A compositionally biased stretch (low complexity) spans 58–71; sequence QAPQQQQQQQQQPQ. The span at 166 to 184 shows a compositional bias: polar residues; that stretch reads PSLTNARGQNDQTLPQSNP. Residues 349–367 are compositionally biased toward gly residues; the sequence is GVGGGLGSGSGSSGSGAGG. The segment covering 372–388 has biased composition (polar residues); sequence DNSSNDKLVKSGVQTSP.

This sequence belongs to the CNOT2/3/5 family. Component of the CCR4-NOT complex composed of at least Pop2/Caf1-55, Ccr4, Not1, Rga/Not2, and Not3. In terms of tissue distribution, expressed in heterogeneous levels between adjacent germline stem cells (at protein level).

The protein resides in the cytoplasm. Functionally, component of the CCR4-NOT complex which is one of the major cellular mRNA deadenylases and is linked to various cellular processes including bulk mRNA degradation, miRNA-mediated repression, translational repression during translational initiation and general transcription regulation. Additional complex functions may be a consequence of its influence on mRNA expression. Essential for viability. Acts as a suppressor of position effect variegation (PEV) at the white locus and regulates the expression of several unrelated genes. Plays a role in germline stem cell differentiation in the ovaries. The sequence is that of Regulator of gene activity from Drosophila melanogaster (Fruit fly).